Consider the following 109-residue polypeptide: uncharacterized protein (109 aa).

The helical transmembrane segment at 29–49 threads the bilayer; it reads ITIIITLVIIFIIFTLIILYF.

Its subcellular location is the membrane. This is an uncharacterized protein from Sputnik virophage.